A 108-amino-acid polypeptide reads, in one-letter code: Parvalbumin alpha (108 aa).

A1 is modified (N-acetylalanine). EF-hand domains lie at 37–72 (MSAN…FAAD) and 76–108 (LTDA…VHEA). D50, D52, S54, F56, E58, E61, D89, D91, D93, K95, and E100 together coordinate Ca(2+).

Belongs to the parvalbumin family.

Its function is as follows. In muscle, parvalbumin is thought to be involved in relaxation after contraction. It binds two calcium ions. The polypeptide is Parvalbumin alpha (Esox lucius (Northern pike)).